The primary structure comprises 200 residues: Cytochrome c biogenesis ATP-binding export protein CcmA (200 aa).

The 199-residue stretch at 2 to 200 folds into the ABC transporter domain; the sequence is LDVIELDFDY…NKADYEEYHL (199 aa). ATP is bound at residue 34-41; sequence GSNGAGKT.

This sequence belongs to the ABC transporter superfamily. CcmA exporter (TC 3.A.1.107) family. The complex is composed of two ATP-binding proteins (CcmA) and two transmembrane proteins (CcmB).

The protein localises to the cell inner membrane. It catalyses the reaction heme b(in) + ATP + H2O = heme b(out) + ADP + phosphate + H(+). In terms of biological role, part of the ABC transporter complex CcmAB involved in the biogenesis of c-type cytochromes; once thought to export heme, this seems not to be the case, but its exact role is uncertain. Responsible for energy coupling to the transport system. This is Cytochrome c biogenesis ATP-binding export protein CcmA from Legionella pneumophila (strain Lens).